Here is a 600-residue protein sequence, read N- to C-terminus: Dihydroxy-acid dehydratase (600 aa).

Asp-82 contacts Mg(2+). A [2Fe-2S] cluster-binding site is contributed by Cys-123. Mg(2+)-binding residues include Asp-124 and Lys-125. Residue Lys-125 is modified to N6-carboxylysine. Cys-192 is a binding site for [2Fe-2S] cluster. A Mg(2+)-binding site is contributed by Glu-489. The active-site Proton acceptor is the Ser-515.

Belongs to the IlvD/Edd family. In terms of assembly, homodimer. [2Fe-2S] cluster is required as a cofactor. Mg(2+) serves as cofactor.

It catalyses the reaction (2R)-2,3-dihydroxy-3-methylbutanoate = 3-methyl-2-oxobutanoate + H2O. The catalysed reaction is (2R,3R)-2,3-dihydroxy-3-methylpentanoate = (S)-3-methyl-2-oxopentanoate + H2O. The protein operates within amino-acid biosynthesis; L-isoleucine biosynthesis; L-isoleucine from 2-oxobutanoate: step 3/4. It participates in amino-acid biosynthesis; L-valine biosynthesis; L-valine from pyruvate: step 3/4. Functions in the biosynthesis of branched-chain amino acids. Catalyzes the dehydration of (2R,3R)-2,3-dihydroxy-3-methylpentanoate (2,3-dihydroxy-3-methylvalerate) into 2-oxo-3-methylpentanoate (2-oxo-3-methylvalerate) and of (2R)-2,3-dihydroxy-3-methylbutanoate (2,3-dihydroxyisovalerate) into 2-oxo-3-methylbutanoate (2-oxoisovalerate), the penultimate precursor to L-isoleucine and L-valine, respectively. This Phocaeicola vulgatus (strain ATCC 8482 / DSM 1447 / JCM 5826 / CCUG 4940 / NBRC 14291 / NCTC 11154) (Bacteroides vulgatus) protein is Dihydroxy-acid dehydratase.